The chain runs to 482 residues: Mannose-1-phosphate guanylyltransferase 2 (482 aa).

This sequence belongs to the mannose-6-phosphate isomerase type 2 family.

It catalyses the reaction alpha-D-mannose 1-phosphate + GTP + H(+) = GDP-alpha-D-mannose + diphosphate. The protein operates within nucleotide-sugar biosynthesis; GDP-alpha-D-mannose biosynthesis; GDP-alpha-D-mannose from alpha-D-mannose 1-phosphate (GTP route): step 1/1. In terms of biological role, involved in GDP-mannose biosynthesis which serves as the activated sugar nucleotide precursor for mannose residues in cell surface polysaccharides. This enzyme participates in synthesis of the LPS O antigen. The protein is Mannose-1-phosphate guanylyltransferase 2 (manC2) of Escherichia coli O157:H7.